A 481-amino-acid chain; its full sequence is tRNA-2-methylthio-N(6)-dimethylallyladenosine synthase (481 aa).

In terms of domain architecture, MTTase N-terminal spans 24–140 (KKLFIESYGC…LPNLLAEVEE (117 aa)). [4Fe-4S] cluster-binding residues include cysteine 33, cysteine 69, cysteine 103, cysteine 178, cysteine 182, and cysteine 185. The region spanning 164 to 411 (MSNGITALVS…DLQQKHAWFR (248 aa)) is the Radical SAM core domain. The region spanning 413–476 (EEFVGKTVEV…SGTLKGEAVG (64 aa)) is the TRAM domain.

Belongs to the methylthiotransferase family. MiaB subfamily. As to quaternary structure, monomer. [4Fe-4S] cluster is required as a cofactor.

It localises to the cytoplasm. The enzyme catalyses N(6)-dimethylallyladenosine(37) in tRNA + (sulfur carrier)-SH + AH2 + 2 S-adenosyl-L-methionine = 2-methylsulfanyl-N(6)-dimethylallyladenosine(37) in tRNA + (sulfur carrier)-H + 5'-deoxyadenosine + L-methionine + A + S-adenosyl-L-homocysteine + 2 H(+). Its function is as follows. Catalyzes the methylthiolation of N6-(dimethylallyl)adenosine (i(6)A), leading to the formation of 2-methylthio-N6-(dimethylallyl)adenosine (ms(2)i(6)A) at position 37 in tRNAs that read codons beginning with uridine. In Flavobacterium johnsoniae (strain ATCC 17061 / DSM 2064 / JCM 8514 / BCRC 14874 / CCUG 350202 / NBRC 14942 / NCIMB 11054 / UW101) (Cytophaga johnsonae), this protein is tRNA-2-methylthio-N(6)-dimethylallyladenosine synthase.